The primary structure comprises 644 residues: Acetyl-coenzyme A synthetase 2 (644 aa).

Residues 189-192, Thr307, and Asn331 each bind CoA; that span reads RGGK. ATP is bound by residues 383–385, 407–412, Asp496, and Arg511; these read GEP and DTWWQT. Ser519 lines the CoA pocket. ATP is bound at residue Arg522. Mg(2+) is bound by residues Val533, His535, and Val538. Lys605 carries the post-translational modification N6-acetyllysine.

This sequence belongs to the ATP-dependent AMP-binding enzyme family. Requires Mg(2+) as cofactor. Acetylated. Deacetylation by the SIR2-homolog deacetylase activates the enzyme.

It carries out the reaction acetate + ATP + CoA = acetyl-CoA + AMP + diphosphate. Functionally, catalyzes the conversion of acetate into acetyl-CoA (AcCoA), an essential intermediate at the junction of anabolic and catabolic pathways. AcsA undergoes a two-step reaction. In the first half reaction, AcsA combines acetate with ATP to form acetyl-adenylate (AcAMP) intermediate. In the second half reaction, it can then transfer the acetyl group from AcAMP to the sulfhydryl group of CoA, forming the product AcCoA. This chain is Acetyl-coenzyme A synthetase 2, found in Pseudomonas putida (strain ATCC 47054 / DSM 6125 / CFBP 8728 / NCIMB 11950 / KT2440).